The primary structure comprises 27 residues: Dermaseptin-like peptide (27 aa).

Has antimicrobial activity against the Gram-positive bacterium M.luteus and the yeast C.albicans. Has hemolytic activity on human and duck erythrocytes. This Schistosoma mansoni (Blood fluke) protein is Dermaseptin-like peptide.